Here is a 336-residue protein sequence, read N- to C-terminus: F420-dependent glucose-6-phosphate dehydrogenase (336 aa).

Aspartate 39 is a coenzyme F420-(gamma-Glu)n binding site. Histidine 40 acts as the Proton donor in catalysis. Residues threonine 76 and 107 to 108 (TG) each bind coenzyme F420-(gamma-Glu)n. Residue glutamate 109 is the Proton acceptor of the active site. Coenzyme F420-(gamma-Glu)n is bound by residues asparagine 112, 177–178 (GG), and 180–181 (VV). The substrate site is built by threonine 195, lysine 198, lysine 259, and arginine 283.

This sequence belongs to the F420-dependent glucose-6-phosphate dehydrogenase family. Homodimer.

The catalysed reaction is oxidized coenzyme F420-(gamma-L-Glu)(n) + D-glucose 6-phosphate + H(+) = 6-phospho-D-glucono-1,5-lactone + reduced coenzyme F420-(gamma-L-Glu)(n). Functionally, catalyzes the coenzyme F420-dependent oxidation of glucose 6-phosphate (G6P) to 6-phosphogluconolactone. Appears to have a role in resistance to oxidative stress, via its consumption of G6P that serves as a source of reducing power to combat oxidative stress in mycobacteria. This Mycolicibacterium fortuitum (Mycobacterium fortuitum) protein is F420-dependent glucose-6-phosphate dehydrogenase.